Consider the following 372-residue polypeptide: Flagellar P-ring protein (372 aa).

Positions 1–26 are cleaved as a signal peptide; the sequence is MNLSSLPFRLLAAAVALCAIAAPASA.

The protein belongs to the FlgI family. In terms of assembly, the basal body constitutes a major portion of the flagellar organelle and consists of four rings (L,P,S, and M) mounted on a central rod.

The protein localises to the periplasm. It is found in the bacterial flagellum basal body. In terms of biological role, assembles around the rod to form the L-ring and probably protects the motor/basal body from shearing forces during rotation. This is Flagellar P-ring protein from Xanthomonas campestris pv. campestris (strain B100).